Consider the following 259-residue polypeptide: Sugar fermentation stimulation protein homolog (259 aa).

Belongs to the SfsA family.

This is Sugar fermentation stimulation protein homolog from Chloroflexus aurantiacus (strain ATCC 29364 / DSM 637 / Y-400-fl).